The primary structure comprises 212 residues: Nuclear phosphoprotein UL3 homolog (212 aa).

It belongs to the alphaherpesvirinae HHV-1 UL3 family. Phosphorylated.

Its subcellular location is the host nucleus. This chain is Nuclear phosphoprotein UL3 homolog, found in Equus caballus (Horse).